The chain runs to 261 residues: Major biofilm matrix component (261 aa).

The first 27 residues, 1 to 27, serve as a signal peptide directing secretion; the sequence is MGMKKKLSLGVASAALGLALVGGGTWA. A disordered region spans residues 241–261; the sequence is DHTDKDGYVKENEKAHSEDKN.

The protein belongs to the peptidase M73 family. As to quaternary structure, forms fibers. Fibers have variable length and are 10-15 nm width. Interacts with obg (AC P20964) in pull-down experiments.

Its subcellular location is the secreted. The protein localises to the forespore intermembrane space. TasA is the major protein component of the biofilm extracellular matrix. It forms amyloid fibers that bind cells together in the biofilm. Exhibits an antibacterial activity against a variety of Gram-positive and Gram-negative bacteria. In laboratory strains, is also involved in proper spore coat assembly. The sequence is that of Major biofilm matrix component from Bacillus subtilis (strain 168).